The sequence spans 493 residues: MNHILAIDQGTTSSRAMVFDEALTLKSVAQEEFPQIYPRPGWVEHDPSDLWSSVAATARAAVERAEIDGSLAAIGITNQRETVVVWERASGHPIHNAIVWQDRRTADLCHALAEAGHEPTITERTGLLLDPYFSATKLKWLLDHVEGARARARRGELLFGTVDSYLIWKLTGGRAHVTDATNAARTMLFDIGRGIWDPEICGLLDIPMEMLPEVRDCAAPFGMTRADLFGREIPILGVAGDQQAATCGQACFRPGMMKSTYGTGCFALLNTGEERVTSRARLLTTIAYQLGGKRTYALEGSIFIAGAVVQWLRDGLKIIREAGETQGLALSSDAAQDLVIVPAFTGLGAPWWKPESRGAVFGLTRNSGPAEFARAALESVGYQTRDLLEAMRADWAAGAEGVLRVDGGMAASDWSLQFLADIIGAPVDRPVVRETTALGVAWLAGMQAGLCPGPEEFAADWALERRFEPQMEASVREAKYDRWGRAVRAVMAV.

ADP is bound at residue Thr-11. Residues Thr-11, Thr-12, and Ser-13 each coordinate ATP. Thr-11 provides a ligand contact to sn-glycerol 3-phosphate. Residue Arg-15 participates in ADP binding. Positions 80, 81, 132, and 241 each coordinate sn-glycerol 3-phosphate. Positions 80, 81, 132, 241, and 242 each coordinate glycerol. The ADP site is built by Thr-263 and Gly-306. Thr-263, Gly-306, Gln-310, and Gly-408 together coordinate ATP. Residue Gly-408 participates in ADP binding.

The protein belongs to the FGGY kinase family.

The enzyme catalyses glycerol + ATP = sn-glycerol 3-phosphate + ADP + H(+). Its pathway is polyol metabolism; glycerol degradation via glycerol kinase pathway; sn-glycerol 3-phosphate from glycerol: step 1/1. Inhibited by fructose 1,6-bisphosphate (FBP). Its function is as follows. Key enzyme in the regulation of glycerol uptake and metabolism. Catalyzes the phosphorylation of glycerol to yield sn-glycerol 3-phosphate. The polypeptide is Glycerol kinase (Cereibacter sphaeroides (strain ATCC 17023 / DSM 158 / JCM 6121 / CCUG 31486 / LMG 2827 / NBRC 12203 / NCIMB 8253 / ATH 2.4.1.) (Rhodobacter sphaeroides)).